Reading from the N-terminus, the 733-residue chain is uncharacterized protein (733 aa).

A helical membrane pass occupies residues tryptophan 174–glycine 194.

Its subcellular location is the membrane. This is an uncharacterized protein from Rhizobium meliloti (Ensifer meliloti).